Reading from the N-terminus, the 205-residue chain is Small ribosomal subunit protein uS4 (205 aa).

The disordered stretch occupies residues 19–45 (IWGRPKSPVNRREYGPGQHGQRRKGKL). The S4 RNA-binding domain maps to 94–157 (SRLDAVVYRA…KQLAIVLEAV (64 aa)).

The protein belongs to the universal ribosomal protein uS4 family. Part of the 30S ribosomal subunit. Contacts protein S5. The interaction surface between S4 and S5 is involved in control of translational fidelity.

One of the primary rRNA binding proteins, it binds directly to 16S rRNA where it nucleates assembly of the body of the 30S subunit. In terms of biological role, with S5 and S12 plays an important role in translational accuracy. This is Small ribosomal subunit protein uS4 from Brucella suis biovar 1 (strain 1330).